We begin with the raw amino-acid sequence, 920 residues long: Protein O-mannosyl-transferase TMTC3 (920 aa).

Residues 1–14 (MLEGKMADINFKEV) lie on the Cytoplasmic side of the membrane. A helical membrane pass occupies residues 15–35 (TLIVSVVAACYWNSLFCGFVF). Over 36 to 94 (DDVSAILDNKDLHPSTPLKTLFQNDFWGTPMSEERSHKSYRPLTVLTFRLNYLLSELKP) the chain is Extracellular. Residues 95-115 (MSYHLLNTVFHAVVSVIFLKV) form a helical membrane-spanning segment. Residues 116 to 125 (CRLFLDKRSS) are Cytoplasmic-facing. 2 helical membrane passes run 126–144 (MIAA…AVTG) and 145–163 (VVGR…AFLS). Topologically, residues 164–171 (YTKSKGPD) are cytoplasmic. Residues 172–192 (NSIVWTPIVLTVFLVAVATLC) form a helical membrane-spanning segment. Topologically, residues 193 to 198 (KEQGIT) are extracellular. The chain crosses the membrane as a helical span at residues 199 to 219 (VVGICCVYEVFVAQGYTLPML). The Cytoplasmic portion of the chain corresponds to 220–236 (CTVAGQFLRGKGSIPLS). A helical transmembrane segment spans residues 237 to 257 (MLQTLVKLIVLMLSTLLLVVV). Topologically, residues 258–325 (RVQVIQSQLP…LIESFLDVRN (68 aa)) are extracellular. A helical membrane pass occupies residues 326 to 346 (LATFAFFCFLGALGIFSLRYP). Over 347 to 358 (GDSSKTVLMALC) the chain is Cytoplasmic. The chain crosses the membrane as a helical span at residues 359–379 (LMALPFIPASNLFFPVGFVVA). At 380–381 (ER) the chain is on the extracellular side. Residues 382 to 402 (VLYVPSMGFCILVAHGWQKIS) traverse the membrane as a helical segment. At 403-409 (NKSVLKK) the chain is on the cytoplasmic side. A helical membrane pass occupies residues 410–428 (LSWVCLSMVILTHALKTLH). The Extracellular portion of the chain corresponds to 429–920 (RNWDWESEYT…EEIERILNGE (492 aa)). TPR repeat units follow at residues 451–484 (AKLW…QPDD), 485–518 (IGAH…MPQI), 534–567 (NVYI…RPDF), 568–601 (KQAY…DRNN), 602–635 (ADLW…NPKH), 673–706 (ANGY…QPDF), 707–740 (RSAL…YPDH), 742–775 (KGLI…DPSN), and 776–809 (VQGK…APHE). N-linked (GlcNAc...) asparagine glycosylation is present at Asn499. Phosphotyrosine is present on Tyr508. A glycan (N-linked (GlcNAc...) asparagine) is linked at Asn546. The disordered stretch occupies residues 829–897 (VEQPLAPADK…APHKTTKDIK (69 aa)). The segment covering 840-858 (PGTEEREEIPSEDVKEISS) has biased composition (basic and acidic residues). The segment covering 867-880 (KTNNNRNSKSNKQS) has biased composition (low complexity). The segment covering 887-897 (DAPHKTTKDIK) has biased composition (basic and acidic residues).

Belongs to the TMTC family.

It is found in the membrane. Its subcellular location is the endoplasmic reticulum. It catalyses the reaction a di-trans,poly-cis-dolichyl beta-D-mannosyl phosphate + L-seryl-[protein] = 3-O-(alpha-D-mannosyl)-L-seryl-[protein] + a di-trans,poly-cis-dolichyl phosphate + H(+). The enzyme catalyses a di-trans,poly-cis-dolichyl beta-D-mannosyl phosphate + L-threonyl-[protein] = 3-O-(alpha-D-mannosyl)-L-threonyl-[protein] + a di-trans,poly-cis-dolichyl phosphate + H(+). Its pathway is protein modification; protein glycosylation. Transfers mannosyl residues to the hydroxyl group of serine or threonine residues. The 4 members of the TMTC family are O-mannosyl-transferases dedicated primarily to the cadherin superfamily, each member seems to have a distinct role in decorating the cadherin domains with O-linked mannose glycans at specific regions. Also acts as O-mannosyl-transferase on other proteins such as PDIA3. Involved in the positive regulation of proteasomal protein degradation in the endoplasmic reticulum (ER), and the control of ER stress response. The sequence is that of Protein O-mannosyl-transferase TMTC3 from Mus musculus (Mouse).